A 99-amino-acid chain; its full sequence is uncharacterized protein (99 aa).

This is an uncharacterized protein from Borreliella burgdorferi (strain ATCC 35210 / DSM 4680 / CIP 102532 / B31) (Borrelia burgdorferi).